Here is a 93-residue protein sequence, read N- to C-terminus: Co-chaperonin GroES (93 aa).

The protein belongs to the GroES chaperonin family. Heptamer of 7 subunits arranged in a ring. Interacts with the chaperonin GroEL.

The protein resides in the cytoplasm. Functionally, together with the chaperonin GroEL, plays an essential role in assisting protein folding. The GroEL-GroES system forms a nano-cage that allows encapsulation of the non-native substrate proteins and provides a physical environment optimized to promote and accelerate protein folding. GroES binds to the apical surface of the GroEL ring, thereby capping the opening of the GroEL channel. This is Co-chaperonin GroES from Streptococcus gordonii (strain Challis / ATCC 35105 / BCRC 15272 / CH1 / DL1 / V288).